The primary structure comprises 249 residues: Methionine aminopeptidase (249 aa).

H77 serves as a coordination point for substrate. The a divalent metal cation site is built by D94, D105, and H168. Position 175 (H175) interacts with substrate. Residues E201 and E232 each coordinate a divalent metal cation.

Belongs to the peptidase M24A family. Methionine aminopeptidase type 1 subfamily. In terms of assembly, monomer. Co(2+) is required as a cofactor. It depends on Zn(2+) as a cofactor. Requires Mn(2+) as cofactor. The cofactor is Fe(2+).

It catalyses the reaction Release of N-terminal amino acids, preferentially methionine, from peptides and arylamides.. Its function is as follows. Removes the N-terminal methionine from nascent proteins. The N-terminal methionine is often cleaved when the second residue in the primary sequence is small and uncharged (Met-Ala-, Cys, Gly, Pro, Ser, Thr, or Val). Requires deformylation of the N(alpha)-formylated initiator methionine before it can be hydrolyzed. The chain is Methionine aminopeptidase from Clostridium perfringens (strain 13 / Type A).